An 873-amino-acid chain; its full sequence is Bifunctional levopimaradiene synthase, chloroplastic (873 aa).

Residues 1 to 59 constitute a chloroplast transit peptide; that stretch reads MAGVLFANLPCSLQLSPKVPFRQSTNILIPFHKRSSFGFNAQHCVRSHLRLRWNCVGIH. Lys271 serves as a coordination point for substrate. Positions 405 and 407 each coordinate Mg(2+). A DXDD motif motif is present at residues 405 to 408; it reads DVDD. Lys492 provides a ligand contact to substrate. The Mg(2+) site is built by Asp624, Asp628, Asn769, Thr773, and Glu777. Residues 624–628 carry the DDXXD motif motif; sequence DDLYD.

This sequence belongs to the terpene synthase family. Tpsd subfamily. Mg(2+) serves as cofactor. In terms of tissue distribution, expressed in roots.

Its subcellular location is the plastid. It is found in the chloroplast. It carries out the reaction (2E,6E,10E)-geranylgeranyl diphosphate = (+)-copalyl diphosphate. It catalyses the reaction (+)-copalyl diphosphate = abieta-8(14),12-diene + diphosphate. It participates in terpene metabolism; ginkgolide biosynthesis. Its function is as follows. Catalyzes the initial cyclization step in the biosynthesis of ginkgolides, a structurally unique family of diterpenoids that are highly specific platelet-activating-factor receptor antagonists. Bifunctional enzyme that catalyzes two sequential cyclizations of geranylgeranyl diphosphate (GGPP) to levopimaradiene. The sequence is that of Bifunctional levopimaradiene synthase, chloroplastic (LPS) from Ginkgo biloba (Ginkgo).